Here is an 855-residue protein sequence, read N- to C-terminus: Zinc finger protein 814 (855 aa).

The region spanning 15-91 (VTFEDVAVNF…PMAGVSPKKA (77 aa)) is the KRAB domain. The segment at 120–142 (HRCEAWGNKLYDSGNFHQHQNEH) adopts a C2H2-type 1; degenerate zinc-finger fold. 22 consecutive C2H2-type zinc fingers follow at residues 242-264 (YVCC…QRVH), 269-291 (HECG…QRVH), 296-318 (HECG…QRVH), 324-346 (YECG…QRVH), 352-374 (YECG…QRVH), 380-402 (YECG…QRVH), 408-430 (YECG…QRFH), 436-458 (YGCE…QRVH), 464-486 (FKCG…QRVH), 492-514 (YQCG…QRVH), 520-542 (YECG…QQIH), 548-570 (YECG…QRVH), 576-598 (YGCG…QRVH), 604-626 (YECG…QRMH), 632-654 (YKCG…QRVH), 660-682 (FKCG…QHGH), 688-710 (YVCR…QRIH), 716-738 (YACE…QRVH), 744-766 (YECN…KRIH), 772-794 (YECS…KRVH), 800-822 (YECS…KRVH), and 828-850 (YKCE…QSSH). K335 is covalently cross-linked (Glycyl lysine isopeptide (Lys-Gly) (interchain with G-Cter in SUMO2)). A Glycyl lysine isopeptide (Lys-Gly) (interchain with G-Cter in SUMO2) cross-link involves residue K391.

In Homo sapiens (Human), this protein is Zinc finger protein 814 (ZNF814).